We begin with the raw amino-acid sequence, 312 residues long: MAMKRKKISVIGAGFTGATTAFLLAQKELGDVVLVDIPQLENPTKGKALDMLEASPVLGFDANIIGTSDYADTADSDIVVITAGIARKPGMSRDDLVTTNQKIMKQVTKEVVKYSPNCYIIVLTNPVDAMTYTVFQESGFPKNRVIGQSGVLDTARFRTFVAEELNISVKDVTGFVLGGHGDDMVPLVRYSYAGGIPLEKLIPKDRLDAIVERTRKGGGEIVNLLGNGSAYYAPAASLVEMVEAILKDQRRILPAIAYLEGEYGYEGIYLGVPTILGGNGIEKVIELELTEEEKAALAKSVESVKNVMRMLE.

Residues 12 to 17 (GAGFTG) and D36 each bind NAD(+). R87 and R93 together coordinate substrate. NAD(+)-binding positions include N100 and 123 to 125 (LTN). N125 is a substrate binding site. Phosphoserine is present on S149. R156 is a binding site for substrate. H180 serves as the catalytic Proton acceptor.

It belongs to the LDH/MDH superfamily. MDH type 3 family.

The enzyme catalyses (S)-malate + NAD(+) = oxaloacetate + NADH + H(+). Catalyzes the reversible oxidation of malate to oxaloacetate. The sequence is that of Malate dehydrogenase from Geobacillus kaustophilus (strain HTA426).